The following is a 648-amino-acid chain: DNA mismatch repair protein MutL (648 aa).

The interval 385-430 (STVKGPAVNEPLTENTLNQQKVKTSASTPVVHTGNSVEPKPETSTA) is disordered. Polar residues predominate over residues 396 to 430 (LTENTLNQQKVKTSASTPVVHTGNSVEPKPETSTA).

This sequence belongs to the DNA mismatch repair MutL/HexB family.

In terms of biological role, this protein is involved in the repair of mismatches in DNA. It is required for dam-dependent methyl-directed DNA mismatch repair. May act as a 'molecular matchmaker', a protein that promotes the formation of a stable complex between two or more DNA-binding proteins in an ATP-dependent manner without itself being part of a final effector complex. The protein is DNA mismatch repair protein MutL of Agathobacter rectalis (strain ATCC 33656 / DSM 3377 / JCM 17463 / KCTC 5835 / VPI 0990) (Eubacterium rectale).